The sequence spans 146 residues: 3-dehydroquinate dehydratase (146 aa).

Tyrosine 22 functions as the Proton acceptor in the catalytic mechanism. Residues asparagine 73, histidine 79, and aspartate 86 each contribute to the substrate site. Histidine 101 serves as the catalytic Proton donor. Residues 102–103 and arginine 112 each bind substrate; that span reads IS.

Belongs to the type-II 3-dehydroquinase family. As to quaternary structure, homododecamer.

The catalysed reaction is 3-dehydroquinate = 3-dehydroshikimate + H2O. The protein operates within metabolic intermediate biosynthesis; chorismate biosynthesis; chorismate from D-erythrose 4-phosphate and phosphoenolpyruvate: step 3/7. Its function is as follows. Catalyzes a trans-dehydration via an enolate intermediate. The protein is 3-dehydroquinate dehydratase (aroQ) of Corynebacterium pseudotuberculosis (strain C231).